Consider the following 164-residue polypeptide: Photosystem II extrinsic protein V (164 aa).

The N-terminal stretch at 1-27 is a signal peptide; sequence MNRISIYRIKVLAFLFAVSTYVYPASS. Residues Cys-64, Cys-67, His-68, and His-119 each contribute to the heme c site.

This sequence belongs to the cytochrome c family. PsbV subfamily. In terms of assembly, PSII is composed of 1 copy each of membrane proteins PsbA, PsbB, PsbC, PsbD, PsbE, PsbF, PsbH, PsbI, PsbJ, PsbK, PsbL, PsbM, PsbT, PsbY, PsbZ, Psb30/Ycf12, at least 3 peripheral proteins of the oxygen-evolving complex and a large number of cofactors. It forms dimeric complexes. The extrinsic subunits in red algae are PsbO (OEC33), PsbQ', cytochrome c-550 and PsbU. Heme c serves as cofactor.

It localises to the plastid. The protein resides in the chloroplast thylakoid membrane. Its function is as follows. One of the extrinsic, lumenal subunits of photosystem II (PSII). PSII is a light-driven water plastoquinone oxidoreductase, using light energy to abstract electrons from H(2)O, generating a proton gradient subsequently used for ATP formation. The extrinsic proteins stabilize the structure of photosystem II oxygen-evolving complex (OEC), the ion environment of oxygen evolution and protect the OEC against heat-induced inactivation. This chain is Photosystem II extrinsic protein V, found in Cyanidium caldarium (Red alga).